A 153-amino-acid chain; its full sequence is MPTLTDSPPTTVLTVTELQQLLPHRYPFLLVDRIIDYVPEKYAVGLKNVTINEPFFQGHFPGRPIMPGVLIVEALAQVGGVVLMQMNWAKDKLSVFAGIDKVRFRRPVVPGDQLILRAELLVVKQQRIGKMQGRAEVNGQLVCEGEMMFSLVD.

His59 is an active-site residue.

The protein belongs to the thioester dehydratase family. FabZ subfamily.

The protein localises to the cytoplasm. It catalyses the reaction a (3R)-hydroxyacyl-[ACP] = a (2E)-enoyl-[ACP] + H2O. Functionally, involved in unsaturated fatty acids biosynthesis. Catalyzes the dehydration of short chain beta-hydroxyacyl-ACPs and long chain saturated and unsaturated beta-hydroxyacyl-ACPs. The polypeptide is 3-hydroxyacyl-[acyl-carrier-protein] dehydratase FabZ (Thermosynechococcus vestitus (strain NIES-2133 / IAM M-273 / BP-1)).